Reading from the N-terminus, the 24-residue chain is Lantibiotic 107891 (24 aa).

Residue T2 is modified to (E)-2,3-didehydrobutyrine. Positions 3–7 (SWSLC) form a cross-link, lanthionine (Ser-Cys). Residue W4 is modified to 6'-chlorotryptophan. At S5 the chain carries 2,3-didehydroalanine (Ser). The beta-methyllanthionine (Thr-Cys) cross-link spans 8–11 (TPGC). 2 cross-links (lanthionine (Ser-Cys)) span residues 13 to 20 (SPGGGSNC) and 18 to 23 (SNCSFC). P14 is subject to 3,4-dihydroxyproline; in form A1. P14 is subject to 4-hydroxyproline; in form A2. Positions 21–24 (SFCC) form a cross-link, S-(2-aminovinyl)-D-cysteine (Ser-Cys).

Belongs to the type A lantibiotic family. Post-translationally, maturation of lantibiotics involves the enzymatic conversion of Thr, and Ser into dehydrated AA and the formation of thioether bonds with cysteine. The C-terminal lanthionine undergoes decarboxylation. This is followed by membrane translocation and cleavage of the modified precursor. In terms of processing, occurs in 2 forms, A1 contains 3,4-dihydroxyproline at Pro-14, A2 contains 4-hydroxyproline at Pro-14. The patent report does not provide the stereochemistry of the modified prolines. The patent report does not describe whether the 2,3-didehydrobutyrine is the E- or Z-isomer. In several diagrams it is shown as the E-isomer.

Lanthionine-containing peptide antibiotic (lantibiotic) active on Gram-positive bacteria. The bactericidal activity of lantibiotics is based on depolarization of energized bacterial cytoplasmic membranes, initiated by the formation of aqueous transmembrane pores. The polypeptide is Lantibiotic 107891 (Microbispora sp. (strain 107891)).